We begin with the raw amino-acid sequence, 419 residues long: Vascular endothelial growth factor C (419 aa).

An N-terminal signal peptide occupies residues 1-31 (MHLLGFFSVACSLLAAALLPGPREAPAAAAA). Residues 32–111 (FESGLDLSDA…RTEETIKFAA (80 aa)) constitute a propeptide, or 102. 3 disulfide bridges follow: C131–C173, C162–C209, and C166–C211. N-linked (GlcNAc...) asparagine glycans are attached at residues N175, N205, and N240. The propeptide occupies 228 to 419 (SLPATLPQCQ…PSYWKRPQMS (192 aa)). 4 tandem repeats follow at residues 280-295 (CGPN…QCVC), 304-319 (CGPH…QCVC), 328-343 (CGAN…QCVC), and 347-362 (CPRN…ACEC). A 4 X 16 AA repeats of C-X(10)-C-X-C-X(1,3)-C region spans residues 280–362 (CGPNKELDEE…LNPGKCACEC (83 aa)).

This sequence belongs to the PDGF/VEGF growth factor family. As to quaternary structure, homodimer; non-covalent and antiparallel. Interacts with FLT4/VEGFR3; the interaction is required for FLT4/VEGFR3 homodimarization and activation. In terms of processing, undergoes a complex proteolytic maturation which generates a variety of processed secreted forms with increased activity toward VEGFR-3, but only the fully processed form could activate VEGFR-2. VEGF-C first form an antiparallel homodimer linked by disulfide bonds. Before secretion, a cleavage occurs between Arg-227 and Ser-228 producing a heterotetramer. The next extracellular step of the processing removes the N-terminal propeptide. Finally the mature VEGF-C is composed mostly of two VEGF homology domains (VHDs) bound by non-covalent interactions. In terms of tissue distribution, expressed in the spleen. Expressed in the lymph node, thymus, appendix and bone marrow. Expressed in the heart, placenta, skeletal muscle, ovary and small intestine. Expressed in the prostate, testis and colon.

Its subcellular location is the secreted. Functionally, growth factor active in angiogenesis, and endothelial cell growth, stimulating their proliferation and migration and also has effects on the permeability of blood vessels. May function in angiogenesis of the venous and lymphatic vascular systems during embryogenesis, and also in the maintenance of differentiated lymphatic endothelium in adults. Binds and activates KDR/VEGFR2 and FLT4/VEGFR3 receptors. The protein is Vascular endothelial growth factor C (VEGFC) of Homo sapiens (Human).